Here is a 370-residue protein sequence, read N- to C-terminus: 3-dehydroquinate synthase (370 aa).

Residues 70-75, 104-108, 128-129, Lys-141, Lys-150, and 168-171 contribute to the NAD(+) site; these read DAEDGK, GAATD, TT, and TLET. Zn(2+)-binding residues include Glu-183, His-246, and His-262.

This sequence belongs to the sugar phosphate cyclases superfamily. Dehydroquinate synthase family. Requires Co(2+) as cofactor. Zn(2+) serves as cofactor. The cofactor is NAD(+).

The protein localises to the cytoplasm. It catalyses the reaction 7-phospho-2-dehydro-3-deoxy-D-arabino-heptonate = 3-dehydroquinate + phosphate. It functions in the pathway metabolic intermediate biosynthesis; chorismate biosynthesis; chorismate from D-erythrose 4-phosphate and phosphoenolpyruvate: step 2/7. Functionally, catalyzes the conversion of 3-deoxy-D-arabino-heptulosonate 7-phosphate (DAHP) to dehydroquinate (DHQ). In Rhodococcus opacus (strain B4), this protein is 3-dehydroquinate synthase.